A 462-amino-acid chain; its full sequence is Cysteine--tRNA ligase (462 aa).

A Zn(2+)-binding site is contributed by Cys30. Residues 32-42 (PTVYDRAHLGN) carry the 'HIGH' region motif. Zn(2+)-binding residues include Cys221, His246, and Glu250. Positions 279 to 283 (KMSKS) match the 'KMSKS' region motif. Lys282 is a binding site for ATP.

The protein belongs to the class-I aminoacyl-tRNA synthetase family. In terms of assembly, monomer. It depends on Zn(2+) as a cofactor.

It is found in the cytoplasm. The catalysed reaction is tRNA(Cys) + L-cysteine + ATP = L-cysteinyl-tRNA(Cys) + AMP + diphosphate. This chain is Cysteine--tRNA ligase, found in Paracoccus denitrificans (strain Pd 1222).